The sequence spans 243 residues: Pyridoxine 5'-phosphate synthase (243 aa).

Asn6 lines the 3-amino-2-oxopropyl phosphate pocket. 8 to 9 provides a ligand contact to 1-deoxy-D-xylulose 5-phosphate; the sequence is DH. Arg17 is a 3-amino-2-oxopropyl phosphate binding site. Catalysis depends on His42, which acts as the Proton acceptor. Positions 44 and 49 each coordinate 1-deoxy-D-xylulose 5-phosphate. The Proton acceptor role is filled by Glu72. Thr102 lines the 1-deoxy-D-xylulose 5-phosphate pocket. His192 functions as the Proton donor in the catalytic mechanism. 3-amino-2-oxopropyl phosphate contacts are provided by residues Gly193 and 214-215; that span reads GH.

This sequence belongs to the PNP synthase family. In terms of assembly, homooctamer; tetramer of dimers.

It is found in the cytoplasm. The catalysed reaction is 3-amino-2-oxopropyl phosphate + 1-deoxy-D-xylulose 5-phosphate = pyridoxine 5'-phosphate + phosphate + 2 H2O + H(+). Its pathway is cofactor biosynthesis; pyridoxine 5'-phosphate biosynthesis; pyridoxine 5'-phosphate from D-erythrose 4-phosphate: step 5/5. Functionally, catalyzes the complicated ring closure reaction between the two acyclic compounds 1-deoxy-D-xylulose-5-phosphate (DXP) and 3-amino-2-oxopropyl phosphate (1-amino-acetone-3-phosphate or AAP) to form pyridoxine 5'-phosphate (PNP) and inorganic phosphate. The protein is Pyridoxine 5'-phosphate synthase of Sulfurihydrogenibium sp. (strain YO3AOP1).